Here is a 380-residue protein sequence, read N- to C-terminus: E3 ubiquitin-protein ligase RNF13 (380 aa).

An N-terminal signal peptide occupies residues 1–34 (MLLSIGMLMLSATQVYTILTVQLFAFLNLLPVEA). Residues 35–182 (DILAYNFENA…VPELSLPLEY (148 aa)) lie on the Lumenal side of the membrane. The 97-residue stretch at 64–160 (LKGFLINSKP…GESSANSLKD (97 aa)) folds into the PA domain. An N-linked (GlcNAc...) asparagine glycan is attached at Asn-88. Residues 183-203 (YLIPFLIIVGICLILIVIFMI) form a helical membrane-spanning segment. Residues 204-380 (TKFVQDRHRN…EPDYNIANTV (177 aa)) lie on the Cytoplasmic side of the membrane. The RING-type; atypical zinc finger occupies 240–282 (CAICLEEYEDGDKLRILPCSHAYHCKCVDPWLTKTKKTCPVCK). Positions 285–380 (VVPSQGDSDS…EPDYNIANTV (96 aa)) are disordered. A compositionally biased stretch (acidic residues) spans 338 to 356 (SDYEDDDNEETDSSDADNE).

Interacts with ERN1. In terms of processing, autoubiquitinated.

The protein resides in the endoplasmic reticulum membrane. It is found in the late endosome membrane. It localises to the lysosome membrane. Its subcellular location is the nucleus inner membrane. It catalyses the reaction S-ubiquitinyl-[E2 ubiquitin-conjugating enzyme]-L-cysteine + [acceptor protein]-L-lysine = [E2 ubiquitin-conjugating enzyme]-L-cysteine + N(6)-ubiquitinyl-[acceptor protein]-L-lysine.. The protein operates within protein modification; protein ubiquitination. Functionally, E3 ubiquitin-protein ligase that regulates cell proliferation. Involved in apoptosis regulation. Mediates ER stress-induced activation of JNK signaling pathway and apoptosis by promoting ERN1 activation and splicing of XBP1 mRNA. Also involved in protein trafficking and localization. The sequence is that of E3 ubiquitin-protein ligase RNF13 (Rnf13) from Rattus norvegicus (Rat).